Reading from the N-terminus, the 934-residue chain is Pesticidal crystal protein Cry1Aa (934 aa).

It belongs to the delta endotoxin family.

Its function is as follows. Promotes colloidosmotic lysis by binding to the midgut epithelial cells of many lepidopteran larvae. The polypeptide is Pesticidal crystal protein Cry1Aa (cry1Aa) (Bacillus thuringiensis subsp. sotto).